A 145-amino-acid chain; its full sequence is D-aminoacyl-tRNA deacylase (145 aa).

Positions 137–138 match the Gly-cisPro motif, important for rejection of L-amino acids motif; that stretch reads GP.

The protein belongs to the DTD family. In terms of assembly, homodimer.

The protein localises to the cytoplasm. The catalysed reaction is glycyl-tRNA(Ala) + H2O = tRNA(Ala) + glycine + H(+). The enzyme catalyses a D-aminoacyl-tRNA + H2O = a tRNA + a D-alpha-amino acid + H(+). Functionally, an aminoacyl-tRNA editing enzyme that deacylates mischarged D-aminoacyl-tRNAs. Also deacylates mischarged glycyl-tRNA(Ala), protecting cells against glycine mischarging by AlaRS. Acts via tRNA-based rather than protein-based catalysis; rejects L-amino acids rather than detecting D-amino acids in the active site. By recycling D-aminoacyl-tRNA to D-amino acids and free tRNA molecules, this enzyme counteracts the toxicity associated with the formation of D-aminoacyl-tRNA entities in vivo and helps enforce protein L-homochirality. The sequence is that of D-aminoacyl-tRNA deacylase from Salmonella agona (strain SL483).